Consider the following 236-residue polypeptide: Ribosome assembly factor mrt4 (236 aa).

The protein belongs to the universal ribosomal protein uL10 family. Associates with the pre-60S ribosomal particle.

The protein localises to the nucleus. It is found in the nucleolus. The protein resides in the cytoplasm. Functionally, component of the ribosome assembly machinery. Nuclear paralog of the ribosomal protein P0, it binds pre-60S subunits at an early stage of assembly in the nucleolus, and is replaced by P0 in cytoplasmic pre-60S subunits and mature 80S ribosomes. The protein is Ribosome assembly factor mrt4 of Eremothecium gossypii (strain ATCC 10895 / CBS 109.51 / FGSC 9923 / NRRL Y-1056) (Yeast).